The following is a 465-amino-acid chain: Protein hedgehog (465 aa).

C79 carries the N-palmitoyl cysteine lipid modification. E143, E144, D149, T179, E180, D183, and D185 together coordinate Ca(2+). G251 carries Cholesterol glycine ester lipidation.

Belongs to the hedgehog family. In terms of assembly, interacts with shf. Post-translationally, the C-terminal part of the hedgehog protein precursor displays an autoproteolysis activity that results in the cleavage of the full-length protein into two parts (N-product and C-product). In addition, the C-terminal part displays a cholesterol transferase activity that results by the covalent attachment of a cholesterol moiety to the C-terminal of the newly generated N-product. The N-product is the active species in both local and long-range signaling, whereas the C-product has no signaling activity. In terms of processing, cholesterylation is required for N-product targeting to lipid rafts and multimerization. N-palmitoylation by Rasp of the hedgehog N-product, within the secretory pathway, is required for the embryonic and larval patterning activities of the hedgehog signal.

Its subcellular location is the nucleus. It is found in the cytoplasm. The protein resides in the cell membrane. It carries out the reaction glycyl-L-cysteinyl-[protein] + cholesterol + H(+) = [protein]-C-terminal glycyl cholesterol ester + N-terminal L-cysteinyl-[protein]. The C-terminal part of the hedgehog protein precursor displays an autoproteolysis activity that results in the cleavage of the full-length protein into two parts (N-product and C-product). In addition, the C-terminal part displays a cholesterol transferase activity that results by the covalent attachment of a cholesterol moiety to the C-terminal of the newly generated N-product. Once cleaved, the C-product has no signaling activity and diffuses from the cell. In terms of biological role, the dually lipidated hedgehog protein N-product is a morphogen which is essential for a variety of patterning events during development. Establishes the anterior-posterior axis of the embryonic segments and patterns the larval imaginal disks. Binds to the patched (ptc) receptor, which functions in association with smoothened (smo), to activate the transcription of target genes wingless (wg), decapentaplegic (dpp) and ptc. In the absence of hh, ptc represses the constitutive signaling activity of smo through fused (fu). Essential component of a signaling pathway which regulates the Duox-dependent gut immune response to bacterial uracil; required to activate Cad99C-dependent endosome formation, norpA-dependent Ca2+ mobilization and p38 MAPK, which are essential steps in the Duox-dependent production of reactive oxygen species (ROS) in response to intestinal bacterial infection. During photoreceptor differentiation, it up-regulates transcription of Ubr3, which in turn promotes the hh-signaling pathway by mediating the ubiquitination and degradation of cos. The protein is Protein hedgehog of Drosophila erecta (Fruit fly).